We begin with the raw amino-acid sequence, 444 residues long: Radical S-adenosyl methionine domain-containing protein 1, mitochondrial (444 aa).

The transit peptide at 1–39 directs the protein to the mitochondrion; sequence MSTRVLTLTLLKKRHLMQCFWSTVGSVHLRSIASDKIPS. One can recognise a Radical SAM core domain in the interval 40–274; sequence HAVEASLYVH…CRVLEESGFH (235 aa). Y47 contacts S-adenosyl-L-methionine. 3 residues coordinate [4Fe-4S] cluster: C53, C57, and C60. S-adenosyl-L-methionine contacts are provided by residues G102, 103–104, E135, Q162, R174, and D199; that span reads GT.

It belongs to the anaerobic coproporphyrinogen-III oxidase family. HemW subfamily. It depends on [4Fe-4S] cluster as a cofactor.

It is found in the mitochondrion. May be a heme chaperone, appears to bind heme. Homologous bacterial proteins do not have oxygen-independent coproporphyrinogen-III oxidase activity. Binds 1 [4Fe-4S] cluster. The cluster is coordinated with 3 cysteines and an exchangeable S-adenosyl-L-methionine. This is Radical S-adenosyl methionine domain-containing protein 1, mitochondrial (rsad1) from Danio rerio (Zebrafish).